Here is a 436-residue protein sequence, read N- to C-terminus: Trigger factor (436 aa).

Residues 164 to 249 (GDTVVIDFEG…IHEVKTKELP (86 aa)) enclose the PPIase FKBP-type domain.

Belongs to the FKBP-type PPIase family. Tig subfamily.

Its subcellular location is the cytoplasm. It catalyses the reaction [protein]-peptidylproline (omega=180) = [protein]-peptidylproline (omega=0). Its function is as follows. Involved in protein export. Acts as a chaperone by maintaining the newly synthesized protein in an open conformation. Functions as a peptidyl-prolyl cis-trans isomerase. The sequence is that of Trigger factor from Ligilactobacillus salivarius (strain UCC118) (Lactobacillus salivarius).